A 177-amino-acid chain; its full sequence is Large ribosomal subunit protein uL6 (177 aa).

It belongs to the universal ribosomal protein uL6 family. In terms of assembly, part of the 50S ribosomal subunit.

This protein binds to the 23S rRNA, and is important in its secondary structure. It is located near the subunit interface in the base of the L7/L12 stalk, and near the tRNA binding site of the peptidyltransferase center. The polypeptide is Large ribosomal subunit protein uL6 (Bartonella quintana (strain Toulouse) (Rochalimaea quintana)).